Here is a 540-residue protein sequence, read N- to C-terminus: Chaperonin GroEL (540 aa).

Residues 29–32 (TLGP), 86–90 (DGTTT), glycine 413, 476–478 (NAA), and aspartate 492 contribute to the ATP site.

The protein belongs to the chaperonin (HSP60) family. Forms a cylinder of 14 subunits composed of two heptameric rings stacked back-to-back. Interacts with the co-chaperonin GroES.

It localises to the cytoplasm. The enzyme catalyses ATP + H2O + a folded polypeptide = ADP + phosphate + an unfolded polypeptide.. In terms of biological role, together with its co-chaperonin GroES, plays an essential role in assisting protein folding. The GroEL-GroES system forms a nano-cage that allows encapsulation of the non-native substrate proteins and provides a physical environment optimized to promote and accelerate protein folding. This chain is Chaperonin GroEL, found in Streptococcus constellatus.